The sequence spans 805 residues: Acetyl-CoA decarbonylase/synthase complex subunit alpha 2 (805 aa).

Positions 72, 75, 76, 78, 83, and 93 each coordinate [4Fe-4S] cluster. Histidine 116 lines the CO pocket. [Ni-4Fe-4S] cluster is bound by residues histidine 249, cysteine 277, and cysteine 322. 4Fe-4S ferredoxin-type domains lie at 407-435 (EEFKVYIDKCVKCGECMLACPEELDIPEA) and 445-474 (EYLEALHDVCIGCRRCEQVCKKEIPILNVL). Cysteine 416, cysteine 419, cysteine 422, cysteine 426, cysteine 454, cysteine 457, cysteine 460, and cysteine 464 together coordinate [4Fe-4S] cluster. [Ni-4Fe-4S] cluster contacts are provided by cysteine 522, cysteine 551, and cysteine 586.

It belongs to the Ni-containing carbon monoxide dehydrogenase family. Heterotetramer of two alpha and two epsilon subunits. The ACDS complex is made up of alpha, epsilon, beta, gamma and delta subunits with a probable stoichiometry of (alpha(2)epsilon(2))(4)-beta(8)-(gamma(1)delta(1))(8). It depends on [4Fe-4S] cluster as a cofactor. The cofactor is [Ni-4Fe-4S] cluster.

It carries out the reaction CO + 2 oxidized [2Fe-2S]-[ferredoxin] + H2O = 2 reduced [2Fe-2S]-[ferredoxin] + CO2 + 2 H(+). The protein operates within one-carbon metabolism; methanogenesis from acetate. In terms of biological role, part of the ACDS complex that catalyzes the reversible cleavage of acetyl-CoA, allowing growth on acetate as sole source of carbon and energy. The alpha-epsilon subcomponent functions as a carbon monoxide dehydrogenase. This chain is Acetyl-CoA decarbonylase/synthase complex subunit alpha 2, found in Methanosarcina acetivorans (strain ATCC 35395 / DSM 2834 / JCM 12185 / C2A).